A 125-amino-acid polypeptide reads, in one-letter code: NADH dehydrogenase [ubiquinone] 1 beta subcomplex subunit 8, mitochondrial (125 aa).

Residues 1–29 (MAGRLSGVASRIMGGNGVVARSVGSSLRQ) constitute a mitochondrion transit peptide. Residues 78 to 98 (ALAWLSGGLGFFVGLGLLAVL) traverse the membrane as a helical segment.

The protein belongs to the complex I NDUFB8 subunit family. In terms of assembly, complex I is composed of at least 49 different subunits.

It is found in the mitochondrion inner membrane. In terms of biological role, accessory subunit of the mitochondrial membrane respiratory chain NADH dehydrogenase (Complex I), that is believed not to be involved in catalysis. Complex I functions in the transfer of electrons from NADH to the respiratory chain. The immediate electron acceptor for the enzyme is believed to be ubiquinone. This chain is NADH dehydrogenase [ubiquinone] 1 beta subcomplex subunit 8, mitochondrial, found in Arabidopsis thaliana (Mouse-ear cress).